The following is a 256-amino-acid chain: Small ribosomal subunit protein eS1 (256 aa).

N-acetylalanine; partial is present on Ala-2.

Belongs to the eukaryotic ribosomal protein eS1 family. As to quaternary structure, component of the small ribosomal subunit. Mature ribosomes consist of a small (40S) and a large (60S) subunit. The 40S subunit contains about 33 different proteins and 1 molecule of RNA (18S). The 60S subunit contains about 49 different proteins and 3 molecules of RNA (25S, 5.8S and 5S).

The protein resides in the cytoplasm. The sequence is that of Small ribosomal subunit protein eS1 from Meyerozyma guilliermondii (strain ATCC 6260 / CBS 566 / DSM 6381 / JCM 1539 / NBRC 10279 / NRRL Y-324) (Yeast).